We begin with the raw amino-acid sequence, 2525 residues long: Highly reducing polyketide synthase cm3B (2525 aa).

The span at 1–10 (MQSDTNNSPL) shows a compositional bias: polar residues. Positions 1 to 29 (MQSDTNNSPLSWEELRSGAASSDANSSPP) are disordered. A Ketosynthase family 3 (KS3) domain is found at 29 to 450 (PEPIAIIGMS…GTNAHVVVDA (422 aa)). Active-site for beta-ketoacyl synthase activity residues include C202, H336, and H376. The tract at residues 560 to 895 (VFSGQGSQYA…FLECLGALHV (336 aa)) is malonyl-CoA:ACP transacylase (MAT) domain. Residues 949 to 1087 (HELLGTFAHD…GLVHAETQAA (139 aa)) form an N-terminal hotdog fold region. Residues 949 to 1252 (HELLGTFAHD…AKGVHTTTLP (304 aa)) are dehydratase (DH) domain. The 309-residue stretch at 949–1257 (HELLGTFAHD…TTTLPGDTGL (309 aa)) folds into the PKS/mFAS DH domain. H981 (proton acceptor; for dehydratase activity) is an active-site residue. A C-terminal hotdog fold region spans residues 1107–1257 (VHEVTPQKLY…TTTLPGDTGL (151 aa)). The active-site Proton donor; for dehydratase activity is D1169. A methyltransferase (CMet) domain region spans residues 1399–1504 (LEVGAGTASA…KKLLKPGGKF (106 aa)). Residues 1799-2111 (GLLESIRWKD…AGKHTGKIVL (313 aa)) form an enoyl reductase (ER) domain region. Residues 2411–2489 (AQLLENISQL…ELAKIIAKES (79 aa)) enclose the Carrier domain. Residues 2411–2489 (AQLLENISQL…ELAKIIAKES (79 aa)) form a ketoreductase (KR) domain region. An O-(pantetheine 4'-phosphoryl)serine modification is found at S2449.

Its pathway is secondary metabolite biosynthesis. Highly reducing polyketide synthase; part of the gene cluster that mediates the biosynthesis of beauveriolides I and III, cyclodepsipeptides acting as inhibitors of the acyl-CoA:cholesterol acyltransferase. The HR-PKS cm3B initiates the biosynthesis of beauveriolides by iteratively catalyzing the formation of the linear polyketide chain. The ATP-dependent acetyl-CoA ligase cm3D converts the polyketide carboxylic acid to a CoA thioester which id shuttled to the first T domain in the NRPS cm3A by the acetyltransferase cm3C. Cm3A contains 13 domains and assembles the polyketide chain, L-phenylalanine, L-alanine, and D-leucine (or D-allo-isoleucine) to form beauveriolide I (or beauveriolide III). The production of both beauveriolides I and III suggests the substrate adaptability of cm3B, using different amino acids as substrates. The sequence is that of Highly reducing polyketide synthase cm3B from Cordyceps militaris (strain CM01) (Caterpillar fungus).